Here is a 261-residue protein sequence, read N- to C-terminus: Cytochrome c oxidase subunit 2 (261 aa).

The Mitochondrial intermembrane portion of the chain corresponds to 1–34 (MSFTGIFHFFTNSPCDAAEPWQLGSQDAATPMMQ). Residues 35–55 (GIIDLHHDIFFFLILILVFVS) traverse the membrane as a helical segment. The Mitochondrial matrix segment spans residues 56–87 (RILVRALWHFHSKKNPIPQRIVHGTTIEILRT). Residues 88-108 (IFPSIIPMFIAIPSFALLYSM) form a helical membrane-spanning segment. Over 109 to 261 (DEVVVDPAMT…NQLIPQTGEA (153 aa)) the chain is Mitochondrial intermembrane. Cu cation contacts are provided by His-188, Cys-223, Glu-225, Cys-227, and His-231. Residue Glu-225 participates in Mg(2+) binding.

It belongs to the cytochrome c oxidase subunit 2 family. In terms of assembly, component of the cytochrome c oxidase (complex IV, CIV), a multisubunit enzyme composed of a catalytic core of 3 subunits and several supernumerary subunits. The complex exists as a monomer or a dimer and forms supercomplexes (SCs) in the inner mitochondrial membrane with ubiquinol-cytochrome c oxidoreductase (cytochrome b-c1 complex, complex III, CIII). Cu cation is required as a cofactor.

It is found in the mitochondrion inner membrane. It carries out the reaction 4 Fe(II)-[cytochrome c] + O2 + 8 H(+)(in) = 4 Fe(III)-[cytochrome c] + 2 H2O + 4 H(+)(out). Functionally, component of the cytochrome c oxidase, the last enzyme in the mitochondrial electron transport chain which drives oxidative phosphorylation. The respiratory chain contains 3 multisubunit complexes succinate dehydrogenase (complex II, CII), ubiquinol-cytochrome c oxidoreductase (cytochrome b-c1 complex, complex III, CIII) and cytochrome c oxidase (complex IV, CIV), that cooperate to transfer electrons derived from NADH and succinate to molecular oxygen, creating an electrochemical gradient over the inner membrane that drives transmembrane transport and the ATP synthase. Cytochrome c oxidase is the component of the respiratory chain that catalyzes the reduction of oxygen to water. Electrons originating from reduced cytochrome c in the intermembrane space (IMS) are transferred via the dinuclear copper A center (CU(A)) of subunit 2 and heme A of subunit 1 to the active site in subunit 1, a binuclear center (BNC) formed by heme A3 and copper B (CU(B)). The BNC reduces molecular oxygen to 2 water molecules using 4 electrons from cytochrome c in the IMS and 4 protons from the mitochondrial matrix. The chain is Cytochrome c oxidase subunit 2 (COX2) from Daucus carota (Wild carrot).